The sequence spans 410 residues: Metal tolerance protein 3 (410 aa).

The interval 1–58 (MDGDDRRTPLLGGEGGSTRPPSLRRRDSARSLRSTFLSRLPDKVRGGGDPERPAADVD) is disordered. The Cytoplasmic segment spans residues 1-114 (MDGDDRRTPL…EDKEQKQSES (114 aa)). The segment covering 40-58 (LPDKVRGGGDPERPAADVD) has biased composition (basic and acidic residues). A helical membrane pass occupies residues 115–135 (AMKISNYANIILLVFKVYATI). The Vacuolar segment spans residues 136-140 (KTGSM). A helical transmembrane segment spans residues 141-161 (AIAASTLDSLLDFLAGGILYF). Topologically, residues 162-184 (THLTMKSVNIYKYPIGKLRVQPV) are cytoplasmic. The chain crosses the membrane as a helical span at residues 185–205 (GIIVFAAIMATLGFQVLIQAI). Residues 206–221 (EQLVENKAGEKMTPEQ) lie on the Vacuolar side of the membrane. The helical transmembrane segment at 222–242 (LIWLYSIMLSATVVKLALYIY) threads the bilayer. Residues 243–258 (CRSSGNSIVQAYAKDH) are Cytoplasmic-facing. A helical transmembrane segment spans residues 259-275 (YFDVVTNVVGLVAAVLG). Topologically, residues 276-284 (DKFFWWIDP) are vacuolar. The chain crosses the membrane as a helical span at residues 285-303 (VGAVLLAVYTIVNWSGTVY). At 304–410 (ENAVTLVGQC…VRSRLPSTEP (107 aa)) the chain is on the cytoplasmic side.

It belongs to the cation diffusion facilitator (CDF) transporter (TC 2.A.4) family. SLC30A subfamily.

The protein localises to the vacuole membrane. Functionally, involved in sequestration of excess metal in the cytoplasm into vacuoles to maintain metal homeostasis. This chain is Metal tolerance protein 3 (MTP3), found in Oryza sativa subsp. japonica (Rice).